The chain runs to 622 residues: Palmitoyltransferase pfa3 (622 aa).

Residues methionine 1–cysteine 38 lie on the Cytoplasmic side of the membrane. A helical transmembrane segment spans residues threonine 39 to valine 59. The Vacuolar segment spans residues aspartate 60 to serine 76. Residues tyrosine 77–phenylalanine 97 traverse the membrane as a helical segment. Topologically, residues threonine 98–lysine 175 are cytoplasmic. A DHHC domain is found at arginine 132 to isoleucine 182. Residues alanine 176 to alanine 196 traverse the membrane as a helical segment. The Vacuolar portion of the chain corresponds to serine 197–asparagine 217. The helical transmembrane segment at tyrosine 218–tryptophan 238 threads the bilayer. At histidine 239–aspartate 622 the chain is on the cytoplasmic side. 3 disordered regions span residues proline 298–alanine 334, arginine 419–aspartate 507, and aspartate 533–aspartate 622. Over residues arginine 302 to arginine 311 the composition is skewed to basic and acidic residues. Polar residues predominate over residues threonine 313–proline 330. Basic and acidic residues predominate over residues arginine 419 to glutamine 428. The span at tyrosine 443–proline 455 shows a compositional bias: polar residues. The segment covering proline 466–arginine 488 has biased composition (low complexity). Acidic residues predominate over residues aspartate 533–phenylalanine 547. Basic and acidic residues predominate over residues asparagine 610–aspartate 622.

The protein belongs to the DHHC palmitoyltransferase family. PFA3 subfamily. Post-translationally, autopalmitoylated.

It localises to the vacuole membrane. It catalyses the reaction L-cysteinyl-[protein] + hexadecanoyl-CoA = S-hexadecanoyl-L-cysteinyl-[protein] + CoA. Palmitoyltransferase specific for vac8. Palmitoylates vac8 at one or more of its N-terminal cysteine residues, which is required for its proper membrane localization. This Neurospora crassa (strain ATCC 24698 / 74-OR23-1A / CBS 708.71 / DSM 1257 / FGSC 987) protein is Palmitoyltransferase pfa3 (ptr-3).